The following is a 169-amino-acid chain: Small ribosomal subunit protein uS13c (169 aa).

The transit peptide at Met-1–Cys-47 directs the protein to the chloroplast.

It belongs to the universal ribosomal protein uS13 family. In terms of assembly, part of the 30S ribosomal subunit.

Its subcellular location is the plastid. The protein localises to the chloroplast. Its function is as follows. Located at the top of the head of the 30S subunit, it contacts several helices of the 16S rRNA. In Arabidopsis thaliana (Mouse-ear cress), this protein is Small ribosomal subunit protein uS13c (RPS13).